The sequence spans 259 residues: MLLKTVSSSSSSALSLVNFHGVKKDVSPLLPSISSNLRVSSGKSGNLTFSFRASKSSTTDALSGVVFEPFKEVKKELDLVPTSSHLSLARQKYSDECEAAINEQINVEYNVSYVYHAMYAYFDRDNIALKGLAKFFKESSLEEREHAEKLMEYQNKRGGRVKLQSIVMPLSEFEHVDKGDALYGMELALSLEKLVNEKLLNLHSVASKNNDVHLADFIESEFLTEQVEAIKLISEYVAQLRRVGKGHGTWHFNQMLLEG.

Residues 1-57 (MLLKTVSSSSSSALSLVNFHGVKKDVSPLLPSISSNLRVSSGKSGNLTFSFRASKSS) constitute a chloroplast transit peptide. The interval 58 to 90 (TTDALSGVVFEPFKEVKKELDLVPTSSHLSLAR) is extension peptide (EP). The Ferritin-like diiron domain maps to 91-244 (QKYSDECEAA…EYVAQLRRVG (154 aa)). Residues Glu-108, Glu-143, His-146, Glu-192, and Gln-226 each contribute to the Fe cation site.

Belongs to the ferritin family. Oligomer of 24 subunits. There are two types of subunits: L (light) chain and H (heavy) chain. The major chain can be light or heavy, depending on the species and tissue type. The functional molecule forms a roughly spherical shell with a diameter of 12 nm and contains a central cavity into which the insoluble mineral iron core is deposited.

The protein resides in the plastid. It is found in the chloroplast. It catalyses the reaction 4 Fe(2+) + O2 + 4 H(+) = 4 Fe(3+) + 2 H2O. Its function is as follows. Stores iron in a soluble, non-toxic, readily available form. Important for iron homeostasis. Has ferroxidase activity. Iron is taken up in the ferrous form and deposited as ferric hydroxides after oxidation. The polypeptide is Ferritin-4, chloroplastic (FER4) (Arabidopsis thaliana (Mouse-ear cress)).